The primary structure comprises 189 residues: Probable DNA-directed RNA polymerase subunit delta (189 aa).

The 68-residue stretch at 14-81 (LSMIEVAHAI…GENVWALRTW (68 aa)) folds into the HTH HARE-type domain. Acidic residues-rich tracts occupy residues 90–100 (EVDHPEDDGDE) and 118–189 (EGDD…EDEE). The interval 90-189 (EVDHPEDDGD…DDLDDDEDEE (100 aa)) is disordered.

The protein belongs to the RpoE family. In terms of assembly, RNAP is composed of a core of 2 alpha, a beta and a beta' subunits. The core is associated with a delta subunit and one of several sigma factors.

Its function is as follows. Participates in both the initiation and recycling phases of transcription. In the presence of the delta subunit, RNAP displays an increased specificity of transcription, a decreased affinity for nucleic acids, and an increased efficiency of RNA synthesis because of enhanced recycling. This is Probable DNA-directed RNA polymerase subunit delta from Lactobacillus delbrueckii subsp. bulgaricus (strain ATCC 11842 / DSM 20081 / BCRC 10696 / JCM 1002 / NBRC 13953 / NCIMB 11778 / NCTC 12712 / WDCM 00102 / Lb 14).